Consider the following 260-residue polypeptide: ARL14 effector protein (260 aa).

Met1 is subject to N-acetylmethionine. A Glycyl lysine isopeptide (Lys-Gly) (interchain with G-Cter in SUMO2) cross-link involves residue Lys177. Ser183 bears the Phosphoserine mark.

Interacts with ARL14 and MYO1E.

The protein resides in the cytoplasm. Its function is as follows. Through its interaction with ARL14 and MYO1E, may connect MHC class II-containing cytoplasmic vesicles to the actin network and hence controls the movement of these vesicles along the actin cytoskeleton in dendritic cells. The chain is ARL14 effector protein (ARL14EP) from Bos taurus (Bovine).